Consider the following 386-residue polypeptide: Heavy metal-associated isoprenylated plant protein 5 (386 aa).

The span at 1-16 shows a compositional bias: basic and acidic residues; the sequence is MGEVQEGPKVEQEKKP. The disordered stretch occupies residues 1–40; the sequence is MGEVQEGPKVEQEKKPAATVVPVETTDGKPKSGGGDSAAA. The HMA 1 domain maps to 49 to 112; it reads VSAFVYKVDM…KLEEKTKRKV (64 aa). A metal cation is bound by residues Cys60 and Cys63. A disordered region spans residues 129–153; the sequence is VGEKKADGGDKEAAPPAPAPAAPKE. The span at 130–141 shows a compositional bias: basic and acidic residues; that stretch reads GEKKADGGDKEA. Positions 153–220 constitute an HMA 2 domain; that stretch reads ESVVPLKIRL…KLKRTVEPLV (68 aa). Positions 164 and 167 each coordinate a metal cation. Basic and acidic residues-rich tracts occupy residues 223–245 and 252–297; these read KKDD…KKEA and EAKK…KKDG. Residues 223 to 301 are disordered; it reads KKDDGAAENK…EKKKDGGGVP (79 aa). At Cys383 the chain carries Cysteine methyl ester. Cys383 carries S-farnesyl cysteine lipidation. The propeptide at 384 to 386 is removed in mature form; sequence SVM.

Belongs to the HIPP family. Efficiently farnesylated in vitro.

Functionally, heavy-metal-binding protein. Involved in disease resistance. The polypeptide is Heavy metal-associated isoprenylated plant protein 5 (Arabidopsis thaliana (Mouse-ear cress)).